We begin with the raw amino-acid sequence, 357 residues long: Sorbitol dehydrogenase 2 (357 aa).

C43 contacts Zn(2+). A substrate-binding site is contributed by Y49. Residues H68 and E69 each coordinate Zn(2+). Position 154 (E154) interacts with substrate. Residues D202, K207, 275 to 277, and 299 to 301 contribute to the NAD(+) site; these read VGM and CFR. Positions 301 and 302 each coordinate substrate.

It belongs to the zinc-containing alcohol dehydrogenase family. In terms of assembly, homotetramer. It depends on Zn(2+) as a cofactor.

The enzyme catalyses keto-D-fructose + NADH + H(+) = D-sorbitol + NAD(+). The catalysed reaction is xylitol + NAD(+) = D-xylulose + NADH + H(+). In terms of biological role, polyol dehydrogenase that catalyzes the reversible NAD(+)-dependent oxidation of various sugar alcohols. Is active with D-sorbitol (D-glucitol) and xylitol as substrates, leading to the C2-oxidized product D-fructose and D-xylulose, respectively. The sequence is that of Sorbitol dehydrogenase 2 (SOR2) from Saccharomyces cerevisiae (strain ATCC 204508 / S288c) (Baker's yeast).